A 759-amino-acid polypeptide reads, in one-letter code: Zinc finger protein 287 (759 aa).

Residues 42-124 (RRNFRNFPYP…ALVEDLTQIL (83 aa)) form the SCAN box domain. Residues 127 to 154 (EEAPQSSALPQDTPEDDPNHDPNPASQA) form a disordered region. The 69-residue stretch at 166 to 234 (VTFNDVAVDI…IKEIVEGPNP (69 aa)) folds into the KRAB domain. 14 C2H2-type zinc fingers span residues 366–388 (YSCN…RENH), 394–416 (YECE…QRMH), 422–444 (YECH…QRIH), 450–472 (YKCE…QRTH), 478–500 (YKCL…QRVH), 506–528 (YICN…QKIH), 534–556 (YKCN…QRIH), 562–584 (YKCT…QTTH), 590–612 (YICN…HRTH), 618–640 (YKCS…QRIH), 646–668 (FKCN…QRVH), 674–696 (YKCH…RRTH), 702–724 (YKCS…QRIH), and 730–752 (YGCR…QRVH).

This sequence belongs to the krueppel C2H2-type zinc-finger protein family. Expressed in brain and at low levels in kidney and spleen and few hematopoietic cell lines.

It is found in the nucleus. Functionally, may be involved in transcriptional regulation. This chain is Zinc finger protein 287, found in Mus musculus (Mouse).